Here is a 235-residue protein sequence, read N- to C-terminus: NAD(P)H-quinone oxidoreductase subunit K, chloroplastic (235 aa).

4 residues coordinate [4Fe-4S] cluster: Cys43, Cys44, Cys108, and Cys139.

It belongs to the complex I 20 kDa subunit family. As to quaternary structure, NDH is composed of at least 16 different subunits, 5 of which are encoded in the nucleus. [4Fe-4S] cluster serves as cofactor.

It is found in the plastid. The protein resides in the chloroplast thylakoid membrane. The enzyme catalyses a plastoquinone + NADH + (n+1) H(+)(in) = a plastoquinol + NAD(+) + n H(+)(out). It catalyses the reaction a plastoquinone + NADPH + (n+1) H(+)(in) = a plastoquinol + NADP(+) + n H(+)(out). NDH shuttles electrons from NAD(P)H:plastoquinone, via FMN and iron-sulfur (Fe-S) centers, to quinones in the photosynthetic chain and possibly in a chloroplast respiratory chain. The immediate electron acceptor for the enzyme in this species is believed to be plastoquinone. Couples the redox reaction to proton translocation, and thus conserves the redox energy in a proton gradient. The polypeptide is NAD(P)H-quinone oxidoreductase subunit K, chloroplastic (Ipomoea purpurea (Common morning glory)).